Reading from the N-terminus, the 260-residue chain is Phytolongin Phyl2.1 (260 aa).

Positions 12 to 114 (CIAKGTVILA…LDNPTQHCLQ (103 aa)) constitute a Longin domain. The chain crosses the membrane as a helical; Anchor for type IV membrane protein span at residues 231 to 251 (WIVLMFDLCICLVLFGIWLWI).

Belongs to the synaptobrevin family.

The protein resides in the membrane. Its function is as follows. Non-SNARE longin protein involved in membrane-trafficking machinery. In Arabidopsis thaliana (Mouse-ear cress), this protein is Phytolongin Phyl2.1.